The primary structure comprises 331 residues: MSTKEKLISHVMKEEPVGSRSKVTVVGVGMVGMASAISILLKDLCDELAMVDVMEDKLKGEVMDLQHGSLFLKTKIVGDKDYSVTANSKVVVVTAGARQQEGESRLNLVQRNVNIFKFIIPNIVKYSPNCILMVVSNPVDILTYVAWKLSGFPRHRVIGSGTNLDSARFRHLIGEKLHLHPSSCHAWIVGEHGDSSVPVWSGVNVAGVSLQGLNPQMGTEGDGENWKAIHKEVVDGAYEVIKLKGYTSWAIGMSVADLVESIIKNMHKVHPVSTLVQGMHGVKDEVFLSVPCVLGNSGLTDVIHMTLKAEEEKQVQKSAETLWGVQKELTL.

NAD(+) is bound by residues Gly29–Lys57 and Arg98. The substrate site is built by Arg105, Asn137, and Arg168. Position 137 (Asn137) interacts with NAD(+). The active-site Proton acceptor is His192. Thr247 contributes to the substrate binding site.

Belongs to the LDH/MDH superfamily. LDH family. Homotetramer.

Its subcellular location is the cytoplasm. The enzyme catalyses (S)-lactate + NAD(+) = pyruvate + NADH + H(+). The protein operates within fermentation; pyruvate fermentation to lactate; (S)-lactate from pyruvate: step 1/1. Its function is as follows. Interconverts simultaneously and stereospecifically pyruvate and lactate with concomitant interconversion of NADH and NAD(+). In Patagonotothen tessellata (Black southern cod), this protein is L-lactate dehydrogenase A chain (ldha).